We begin with the raw amino-acid sequence, 174 residues long: Shikimate kinase (174 aa).

15–20 (GTGKST) serves as a coordination point for ATP. Residue S19 coordinates Mg(2+). D37, R61, and G82 together coordinate substrate. ATP is bound at residue R120. R138 provides a ligand contact to substrate.

This sequence belongs to the shikimate kinase family. As to quaternary structure, monomer. Mg(2+) is required as a cofactor.

It localises to the cytoplasm. The enzyme catalyses shikimate + ATP = 3-phosphoshikimate + ADP + H(+). It participates in metabolic intermediate biosynthesis; chorismate biosynthesis; chorismate from D-erythrose 4-phosphate and phosphoenolpyruvate: step 5/7. Functionally, catalyzes the specific phosphorylation of the 3-hydroxyl group of shikimic acid using ATP as a cosubstrate. The polypeptide is Shikimate kinase (Staphylococcus aureus (strain Mu3 / ATCC 700698)).